We begin with the raw amino-acid sequence, 402 residues long: 4-hydroxy-3-methylbut-2-enyl diphosphate reductase (402 aa).

A [4Fe-4S] cluster-binding site is contributed by Cys66. His96 serves as a coordination point for (2E)-4-hydroxy-3-methylbut-2-enyl diphosphate. His96 contributes to the dimethylallyl diphosphate binding site. His96 lines the isopentenyl diphosphate pocket. Residue Cys157 coordinates [4Fe-4S] cluster. (2E)-4-hydroxy-3-methylbut-2-enyl diphosphate is bound at residue His185. Dimethylallyl diphosphate is bound at residue His185. His185 contributes to the isopentenyl diphosphate binding site. Glu187 (proton donor) is an active-site residue. Thr250 contributes to the (2E)-4-hydroxy-3-methylbut-2-enyl diphosphate binding site. Cys288 lines the [4Fe-4S] cluster pocket. 4 residues coordinate (2E)-4-hydroxy-3-methylbut-2-enyl diphosphate: Ser317, Ser318, Asn319, and Ser379. Ser317, Ser318, Asn319, and Ser379 together coordinate dimethylallyl diphosphate. Ser317, Ser318, Asn319, and Ser379 together coordinate isopentenyl diphosphate.

This sequence belongs to the IspH family. Requires [4Fe-4S] cluster as cofactor.

The catalysed reaction is isopentenyl diphosphate + 2 oxidized [2Fe-2S]-[ferredoxin] + H2O = (2E)-4-hydroxy-3-methylbut-2-enyl diphosphate + 2 reduced [2Fe-2S]-[ferredoxin] + 2 H(+). It catalyses the reaction dimethylallyl diphosphate + 2 oxidized [2Fe-2S]-[ferredoxin] + H2O = (2E)-4-hydroxy-3-methylbut-2-enyl diphosphate + 2 reduced [2Fe-2S]-[ferredoxin] + 2 H(+). The protein operates within isoprenoid biosynthesis; dimethylallyl diphosphate biosynthesis; dimethylallyl diphosphate from (2E)-4-hydroxy-3-methylbutenyl diphosphate: step 1/1. Its pathway is isoprenoid biosynthesis; isopentenyl diphosphate biosynthesis via DXP pathway; isopentenyl diphosphate from 1-deoxy-D-xylulose 5-phosphate: step 6/6. Catalyzes the conversion of 1-hydroxy-2-methyl-2-(E)-butenyl 4-diphosphate (HMBPP) into a mixture of isopentenyl diphosphate (IPP) and dimethylallyl diphosphate (DMAPP). Acts in the terminal step of the DOXP/MEP pathway for isoprenoid precursor biosynthesis. In Nostoc punctiforme (strain ATCC 29133 / PCC 73102), this protein is 4-hydroxy-3-methylbut-2-enyl diphosphate reductase.